Here is a 449-residue protein sequence, read N- to C-terminus: Glucose-6-phosphate isomerase (449 aa).

Glu-291 (proton donor) is an active-site residue. Active-site residues include His-312 and Lys-426.

Belongs to the GPI family.

Its subcellular location is the cytoplasm. The catalysed reaction is alpha-D-glucose 6-phosphate = beta-D-fructose 6-phosphate. The protein operates within carbohydrate biosynthesis; gluconeogenesis. It participates in carbohydrate degradation; glycolysis; D-glyceraldehyde 3-phosphate and glycerone phosphate from D-glucose: step 2/4. Functionally, catalyzes the reversible isomerization of glucose-6-phosphate to fructose-6-phosphate. This Streptococcus mutans serotype c (strain ATCC 700610 / UA159) protein is Glucose-6-phosphate isomerase.